Here is a 372-residue protein sequence, read N- to C-terminus: RNA polymerase sigma factor SigA (372 aa).

The sigma-70 factor domain-2 stretch occupies residues 139 to 209 (LAEANLRLVV…TRAIADQART (71 aa)). The Interaction with polymerase core subunit RpoC motif lies at 163 to 166 (DLIQ). A sigma-70 factor domain-3 region spans residues 218–294 (ETINKLIRVQ…DQDALAPSDA (77 aa)). The segment at 307–360 (VLDTLTDREENVLRLRFGLDDGRTRTLEEVGKVFGVTRERIRQIEAKALRKLRH) is sigma-70 factor domain-4. Residues 333–352 (LEEVGKVFGVTRERIRQIEA) constitute a DNA-binding region (H-T-H motif).

The protein belongs to the sigma-70 factor family. RpoD/SigA subfamily. As to quaternary structure, interacts transiently with the RNA polymerase catalytic core.

It is found in the cytoplasm. Sigma factors are initiation factors that promote the attachment of RNA polymerase to specific initiation sites and are then released. This sigma factor is the primary sigma factor during exponential growth. The protein is RNA polymerase sigma factor SigA of Halalkalibacterium halodurans (strain ATCC BAA-125 / DSM 18197 / FERM 7344 / JCM 9153 / C-125) (Bacillus halodurans).